The chain runs to 418 residues: Actin-related protein 3B (418 aa).

Belongs to the actin family. ARP3 subfamily. In terms of assembly, interacts with the Arp2/3 complex composed of ARP2, ARP3, ARPC1B, ARPC1B/p41-ARC, ARPC2/p34-ARC, ARPC3/p21-ARC, ARPC4/p20-ARC and ARPC5/p16-ARC.

The protein localises to the cytoplasm. Its subcellular location is the cytoskeleton. The protein resides in the cell projection. Plays a role in the organization of the actin cytoskeleton. May function as ATP-binding component of the Arp2/3 complex which is involved in regulation of actin polymerization and together with an activating nucleation-promoting factor (NPF) mediates the formation of branched actin networks. May decrease the metastatic potential of tumors. In Mus musculus (Mouse), this protein is Actin-related protein 3B (Actr3b).